Consider the following 327-residue polypeptide: Alkanal monooxygenase beta chain (327 aa).

This sequence belongs to the bacterial luciferase oxidoreductase family. In terms of assembly, heterodimer of an alpha and a beta chain.

The catalysed reaction is a long-chain fatty aldehyde + FMNH2 + O2 = a long-chain fatty acid + hnu + FMN + H2O + 2 H(+). Functionally, light-emitting reaction in luminous bacteria. The specific role of the beta subunit is unknown, but it is absolutely required for bioluminescence activity. This chain is Alkanal monooxygenase beta chain (luxB), found in Photorhabdus luminescens (Xenorhabdus luminescens).